The following is a 533-amino-acid chain: Beta-glucosidase 22 (533 aa).

The N-terminal stretch at 1–24 (MAVSSSTSTCSSFSLLLLLLLLAA) is a signal peptide. Asparagine 41 is a glycosylation site (N-linked (GlcNAc...) asparagine). A beta-D-glucoside-binding positions include glutamine 61, histidine 161, and 206–207 (DE). The active-site Proton donor is the glutamate 207. A disulfide bridge links cysteine 226 with cysteine 234. 2 N-linked (GlcNAc...) asparagine glycosylation sites follow: asparagine 233 and asparagine 238. 2 residues coordinate a beta-D-glucoside: tyrosine 350 and glutamate 421. Residue glutamate 421 is the Nucleophile of the active site. N-linked (GlcNAc...) asparagine glycosylation occurs at asparagine 435. Tryptophan 466 and phenylalanine 482 together coordinate a beta-D-glucoside.

It belongs to the glycosyl hydrolase 1 family.

It carries out the reaction Hydrolysis of terminal, non-reducing beta-D-glucosyl residues with release of beta-D-glucose.. The polypeptide is Beta-glucosidase 22 (BGLU22) (Oryza sativa subsp. japonica (Rice)).